The chain runs to 206 residues: Outer-membrane lipoprotein LolB (206 aa).

A signal peptide spans 1 to 21; it reads MHERNYAVFRLLPLASLLLAA. The N-palmitoyl cysteine moiety is linked to residue Cys22. The S-diacylglycerol cysteine moiety is linked to residue Cys22.

Belongs to the LolB family. As to quaternary structure, monomer.

The protein localises to the cell outer membrane. In terms of biological role, plays a critical role in the incorporation of lipoproteins in the outer membrane after they are released by the LolA protein. In Sodalis glossinidius (strain morsitans), this protein is Outer-membrane lipoprotein LolB.